The following is a 121-amino-acid chain: Snaclec coagulation factor IX-binding protein subunit A (121 aa).

In terms of domain architecture, C-type lectin spans 1–120; the sequence is YEGHCYQTFK…CGERNPFVCE (120 aa). Intrachain disulfides connect Cys-22–Cys-119 and Cys-94–Cys-111. Ca(2+) is bound by residues Ser-33, Glu-35, and Glu-39. Glu-120 contributes to the Ca(2+) binding site.

Belongs to the snaclec family. In terms of assembly, heterodimer of subunits A and B; disulfide-linked. Expressed by the venom gland.

The protein resides in the secreted. Anticoagulant protein which binds to the gamma-carboxyglutamic acid-domain regions of factor IX (F9) (but not factor X) in the presence of calcium with a 1 to 1 stoichiometry. The chain is Snaclec coagulation factor IX-binding protein subunit A from Gloydius halys (Chinese water mocassin).